Consider the following 1124-residue polypeptide: Transient-receptor-potential-like protein (1124 aa).

Positions methionine 1–serine 24 are disordered. Residues methionine 1–lysine 340 are Cytoplasmic-facing. A compositionally biased stretch (low complexity) spans glycine 10–alanine 21. 3 ANK repeats span residues leucine 40 to histidine 69, leucine 78 to aspartate 107, and proline 152 to valine 181. Residues valine 341–alanine 361 form a helical membrane-spanning segment. The Extracellular segment spans residues proline 362–proline 373. The chain crosses the membrane as a helical span at residues phenylalanine 374–valine 394. Over serine 395–glutamate 431 the chain is Cytoplasmic. The chain crosses the membrane as a helical span at residues leucine 432–valine 452. At glycine 453–leucine 512 the chain is on the extracellular side. A helical transmembrane segment spans residues isoleucine 513–phenylalanine 533. Residues serine 534–arginine 548 lie on the Cytoplasmic side of the membrane. A helical transmembrane segment spans residues methionine 549–cysteine 569. Residues glycine 570 to glycine 645 are Extracellular-facing. Residues leucine 646–alanine 666 form a helical membrane-spanning segment. Residues methionine 667 to asparagine 1124 lie on the Cytoplasmic side of the membrane. Calmodulin-binding regions lie at residues serine 710–glutamine 728 and isoleucine 853–glycine 895. Disordered stretches follow at residues arginine 978 to histidine 1013 and leucine 1031 to asparagine 1124. Positions serine 1035–proline 1063 are enriched in low complexity. Basic and acidic residues-rich tracts occupy residues glycine 1069–arginine 1081 and histidine 1090–valine 1106. The segment covering serine 1107 to glutamine 1118 has biased composition (polar residues).

This sequence belongs to the transient receptor (TC 1.A.4) family. STrpC subfamily. In terms of assembly, forms heteromultimers with Trpgamma and, to a lower extent, with trp. Interacts with Fkbp59 in vivo and is found in the inaD signaling complex. As to expression, expressed predominantly in the rhabdomeres of photoreceptor cells.

The protein localises to the membrane. Its subcellular location is the cell projection. It localises to the rhabdomere membrane. Functionally, a light-sensitive calcium channel that is required for inositide-mediated Ca(2+) entry in the retina during phospholipase C (PLC)-mediated phototransduction. Required for vision in the dark and in dim light. Binds calmodulin. Trp and trpl act together in the light response, although it is unclear whether as heteromultimers or distinct units. Also forms a functional cation channel with Trpgamma. Activated by fatty acids, metabolic stress, inositols and GTP-binding proteins. The polypeptide is Transient-receptor-potential-like protein (trpl) (Drosophila melanogaster (Fruit fly)).